A 295-amino-acid polypeptide reads, in one-letter code: Ribosomal protein L11 methyltransferase (295 aa).

S-adenosyl-L-methionine contacts are provided by Thr145, Gly166, Asp188, and Asn230.

The protein belongs to the methyltransferase superfamily. PrmA family.

The protein resides in the cytoplasm. It catalyses the reaction L-lysyl-[protein] + 3 S-adenosyl-L-methionine = N(6),N(6),N(6)-trimethyl-L-lysyl-[protein] + 3 S-adenosyl-L-homocysteine + 3 H(+). Functionally, methylates ribosomal protein L11. The sequence is that of Ribosomal protein L11 methyltransferase from Haemophilus influenzae (strain PittEE).